The primary structure comprises 1236 residues: ATP-dependent helicase/nuclease subunit A (1236 aa).

Residues 4–473 enclose the UvrD-like helicase ATP-binding domain; it reads VKWTKEQQQA…VNLFKNFRSR (470 aa). 25-32 is an ATP binding site; that stretch reads AAAGSGKT. The 295-residue stretch at 512-806 folds into the UvrD-like helicase C-terminal domain; sequence YEDKSLVGGP…RIMSIHKSKG (295 aa).

This sequence belongs to the helicase family. AddA subfamily. Heterodimer of AddA and AddB/RexB. Mg(2+) serves as cofactor.

The catalysed reaction is Couples ATP hydrolysis with the unwinding of duplex DNA by translocating in the 3'-5' direction.. It carries out the reaction ATP + H2O = ADP + phosphate + H(+). The heterodimer acts as both an ATP-dependent DNA helicase and an ATP-dependent, dual-direction single-stranded exonuclease. Recognizes the chi site generating a DNA molecule suitable for the initiation of homologous recombination. The AddA nuclease domain is required for chi fragment generation; this subunit has the helicase and 3' -&gt; 5' nuclease activities. The polypeptide is ATP-dependent helicase/nuclease subunit A (Clostridium novyi (strain NT)).